Here is an 877-residue protein sequence, read N- to C-terminus: Leucine--tRNA ligase (877 aa).

Residues 48-58 (PYPSGKLHMGH) carry the 'HIGH' region motif. A 'KMSKS' region motif is present at residues 636–640 (KMSKS). K639 provides a ligand contact to ATP.

Belongs to the class-I aminoacyl-tRNA synthetase family.

The protein resides in the cytoplasm. The catalysed reaction is tRNA(Leu) + L-leucine + ATP = L-leucyl-tRNA(Leu) + AMP + diphosphate. The protein is Leucine--tRNA ligase of Ralstonia pickettii (strain 12J).